A 489-amino-acid polypeptide reads, in one-letter code: Dipeptide and tripeptide permease B (489 aa).

The Cytoplasmic segment spans residues 1-27; that stretch reads MNTTTPMGMLQQPRPFFMIFFVELWER. Residues 28–48 traverse the membrane as a helical segment; sequence FGYYGVQGVLAVFFVKQLGFS. The Periplasmic segment spans residues 49 to 52; sequence QEQA. A helical transmembrane segment spans residues 53–73; sequence FVTFGAFAALVYGLISIGGYV. Residues 74 to 82 lie on the Cytoplasmic side of the membrane; it reads GDHLLGTKR. The chain crosses the membrane as a helical span at residues 83 to 103; that stretch reads TIVLGALVLAIGYFMTGLSLL. Residues 104 to 106 are Periplasmic-facing; that stretch reads KPD. A helical membrane pass occupies residues 107 to 127; it reads LIFIALGTIAVGNGLFKANPA. Over 128-146 the chain is Cytoplasmic; it reads SLLSKCYPPKAPRLDGAFT. A helical membrane pass occupies residues 147-167; sequence LFYMSINIGSLIALSLAPVIA. Residues 168–172 lie on the Periplasmic side of the membrane; the sequence is DRFGY. A helical membrane pass occupies residues 173-193; that stretch reads SVTYNLCGAGLIIALLVYIAC. The Cytoplasmic portion of the chain corresponds to 194–210; it reads RGMVKDIGSEPDFRPMS. The helical transmembrane segment at 211–231 threads the bilayer; sequence FSKLLYVLLGSVVMIFVCAWL. Residues 232–233 are Periplasmic-facing; the sequence is MH. Residues 234–254 form a helical membrane-spanning segment; that stretch reads NVEVANLVLIVLSIVVTIIFF. The Cytoplasmic segment spans residues 255 to 267; it reads RQAFKLDKTGRNK. Residues 268 to 288 form a helical membrane-spanning segment; that stretch reads MFVAFVLMLEAVVFYILYAQM. The Periplasmic segment spans residues 289–311; sequence PTSLNFFAINNVHHEILGFSINP. Residues 312-332 traverse the membrane as a helical segment; the sequence is VSFQALNPFWVVLASPILAGI. Over 333–350 the chain is Cytoplasmic; the sequence is YTHLGSKGKDLSMPMKFT. A helical transmembrane segment spans residues 351–371; that stretch reads LGMFMCSLGFLTAAAAGMWFA. Topologically, residues 372 to 380 are periplasmic; that stretch reads DAQGLTSPW. The chain crosses the membrane as a helical span at residues 381–401; the sequence is FIVLVYLFQSLGELFISALGL. Over 402 to 411 the chain is Cytoplasmic; sequence AMVAALVPQH. A helical membrane pass occupies residues 412 to 432; it reads LMGFILGISFLTQAAAFLLGG. Residues 433–456 are Periplasmic-facing; the sequence is YVATFTAVPDNITDPLETLPVYTN. A helical transmembrane segment spans residues 457–477; sequence VFGKIGLVTLGVAVVMLLMVP. Residues 478–489 are Cytoplasmic-facing; the sequence is WLKRMIAAPESH.

The protein belongs to the major facilitator superfamily. Proton-dependent oligopeptide transporter (POT/PTR) (TC 2.A.17) family. DtpB subfamily.

Its subcellular location is the cell inner membrane. Functionally, proton-dependent permease that transports di- and tripeptides. This is Dipeptide and tripeptide permease B from Shigella dysenteriae serotype 1 (strain Sd197).